Reading from the N-terminus, the 434-residue chain is F-box/LRR-repeat protein 21 (434 aa).

The F-box domain maps to 39–85 (LLDWGNLPHHVVLRIFQYLPLIDRARASSVCRRWNEVFHIPDLWRKF). 6 LRR repeats span residues 187 to 213 (DTPVDDPSLSILVANNSGTLRRLKMSS), 214 to 239 (CPHVSSNGILCVADHCQGLRELALNY), 242 to 265 (LSDKLLLALSNETHVNLEHLRIDV), 322 to 347 (GRSVSKEILGRLGLNCPRLTELVVCA), 349 to 374 (GIQVIDTELICIAEHCKNLTALGLSE), and 375 to 400 (CEVSCSAFIEFVRLCGRKLTHLSIME).

As to quaternary structure, part of the SCF (SKP1-CUL1-F-box) E3 ubiquitin-protein ligase complex SCF(FBXL21) composed of CUL1, SKP1, RBX1 and FBXL21. Interacts with CRY1 and CRY2.

It is found in the cytoplasm. Its subcellular location is the cytosol. The protein resides in the nucleus. The protein operates within protein modification; protein ubiquitination. Its function is as follows. Substrate-recognition component of the SCF(FBXL21) E3 ubiquitin ligase complex involved in circadian rhythm function. Plays a key role in the maintenance of both the speed and the robustness of the circadian clock oscillation. The SCF(FBXL21) complex mainly acts in the cytosol and mediates ubiquitination of CRY proteins (CRY1 and CRY2), leading to CRY proteins stabilization. The SCF(FBXL21) complex counteracts the activity of the SCF(FBXL3) complex and protects CRY proteins from degradation. Involved in the hypothalamic suprachiasmatic nucleus (SCN) clock regulating temporal organization of the daily activities. In Bos taurus (Bovine), this protein is F-box/LRR-repeat protein 21 (FBXL21).